The chain runs to 399 residues: uncharacterized protein (399 aa).

The interval 375-399 (AAGGHRGSHGKSEQAATVRVVDDRR) is disordered.

The protein belongs to the mycobacterial PPE family.

This is an uncharacterized protein from Mycobacterium tuberculosis (strain ATCC 25618 / H37Rv).